The chain runs to 258 residues: Casein kinase II subunit beta' (258 aa).

Polar residues predominate over residues 1-10 (MGSRSENVGT). Residues 1 to 29 (MGSRSENVGTVTREGSRVEQDDVLMDDDS) form a disordered region.

This sequence belongs to the casein kinase 2 subunit beta family. Tetramer composed of an alpha subunit, an alpha' subunit, one beta subunit and one beta' subunit. Interacts with FACT subunits POB3 and SPT16. Interaction with YTA7. Phosphorylated by alpha subunit. In terms of processing, the N-terminus is blocked.

In terms of biological role, regulatory subunit of casein kinase II/CK2. As part of the kinase complex regulates the basal catalytic activity of the alpha subunit a constitutively active serine/threonine-protein kinase that phosphorylates a large number of substrates containing acidic residues C-terminal to the phosphorylated serine or threonine. In Saccharomyces cerevisiae (strain ATCC 204508 / S288c) (Baker's yeast), this protein is Casein kinase II subunit beta'.